We begin with the raw amino-acid sequence, 276 residues long: MAAETRNVAGAEAPPPQKRYYRQRAHSNPMADHTLRYPVKPEEMDWSELYPEFFAPLTQNQSHDDPKDKKEKRAQAQVEFADIGCGYGGLLVELSPLFPDTLILGLEIRVKVSDYVQDRIRALRAAPAGGFQNIACLRSNAMKHLPNFFYKGQLTKMFFLFPDPHFKRTKHKWRIISPTLLAEYAYVLRVGGLVYTITDVLELHDWMCTHFEEHPLFERVPLEDLSEDPVVGHLGTSTEEGKKVLRNGGKNFPAIFRRIQDPVLQAVTSQTSLPGH.

The tract at residues M1–R36 is disordered. Residue A2 is modified to N-acetylalanine. S27 carries the post-translational modification Phosphoserine; by PKB/AKT1 and RPS6KA3. S-adenosyl-L-homocysteine is bound by residues G84, E107, I108, R109, N140, A141, and L160. Residues G84 and E107 each coordinate S-adenosyl-L-methionine. S-adenosyl-L-methionine-binding residues include R109, N140, A141, and L160. The active site involves D163. Residues P164–K172 form an alphaC helix region. Residues T238 and E240 each coordinate S-adenosyl-L-homocysteine. Positions 238 and 240 each coordinate S-adenosyl-L-methionine. The interval T238–R246 is alpha6 helix.

This sequence belongs to the class I-like SAM-binding methyltransferase superfamily. TrmB family. In terms of assembly, catalytic component of the METTL1-WDR4 complex, composed of METTL1 and WDR4. In terms of processing, phosphorylation at Ser-27 by PKB/AKT1 inactivates its methyltransferase activity via a steric interference mechanism in the active site that locally disrupts the catalytic center. Phosphorylation at Ser-27 does not affect the interaction with WDR4. Ubiquitous.

It localises to the nucleus. It carries out the reaction guanosine(46) in tRNA + S-adenosyl-L-methionine = N(7)-methylguanosine(46) in tRNA + S-adenosyl-L-homocysteine. The enzyme catalyses a guanosine in mRNA + S-adenosyl-L-methionine = an N(7)-methylguanosine in mRNA + S-adenosyl-L-homocysteine. It catalyses the reaction a guanosine in miRNA + S-adenosyl-L-methionine = an N(7)-methylguanosine in miRNA + S-adenosyl-L-homocysteine. It participates in tRNA modification; N(7)-methylguanine-tRNA biosynthesis. Catalytic component of METTL1-WDR4 methyltransferase complex that mediates the formation of N(7)-methylguanine in a subset of RNA species, such as tRNAs, mRNAs and microRNAs (miRNAs). Catalyzes the formation of N(7)-methylguanine at position 46 (m7G46) in a large subset of tRNAs that contain the 5'-RAGGU-3' motif within the variable loop. M7G46 interacts with C13-G22 in the D-loop to stabilize tRNA tertiary structure and protect tRNAs from decay. Also acts as a methyltransferase for a subset of internal N(7)-methylguanine in mRNAs. Internal N(7)-methylguanine methylation of mRNAs in response to stress promotes their relocalization to stress granules, thereby suppressing their translation. Also methylates a specific subset of miRNAs, such as let-7. N(7)-methylguanine methylation of let-7 miRNA promotes let-7 miRNA processing by disrupting an inhibitory secondary structure within the primary miRNA transcript (pri-miRNA). Acts as a regulator of embryonic stem cell self-renewal and differentiation. This Homo sapiens (Human) protein is tRNA (guanine-N(7)-)-methyltransferase.